An 84-amino-acid polypeptide reads, in one-letter code: Large ribosomal subunit protein bL27 (84 aa).

The interval 1 to 24 (MAHKKGGGSSKNGRDSNSQRLGVK) is disordered.

Belongs to the bacterial ribosomal protein bL27 family.

This is Large ribosomal subunit protein bL27 from Leptospira borgpetersenii serovar Hardjo-bovis (strain JB197).